The chain runs to 695 residues: Elongation factor G (695 aa).

In terms of domain architecture, tr-type G spans 8 to 282 (EKTRNIGIMA…AVLDYLPAPT (275 aa)). GTP-binding positions include 17–24 (AHIDAGKT), 81–85 (DTPGH), and 135–138 (NKMD).

It belongs to the TRAFAC class translation factor GTPase superfamily. Classic translation factor GTPase family. EF-G/EF-2 subfamily.

The protein localises to the cytoplasm. Functionally, catalyzes the GTP-dependent ribosomal translocation step during translation elongation. During this step, the ribosome changes from the pre-translocational (PRE) to the post-translocational (POST) state as the newly formed A-site-bound peptidyl-tRNA and P-site-bound deacylated tRNA move to the P and E sites, respectively. Catalyzes the coordinated movement of the two tRNA molecules, the mRNA and conformational changes in the ribosome. The sequence is that of Elongation factor G from Listeria welshimeri serovar 6b (strain ATCC 35897 / DSM 20650 / CCUG 15529 / CIP 8149 / NCTC 11857 / SLCC 5334 / V8).